The primary structure comprises 439 residues: UDP-N-acetylglucosamine--N-acetylmuramyl-(pentapeptide) pyrophosphoryl-undecaprenol N-acetylglucosamine transferase (439 aa).

UDP-N-acetyl-alpha-D-glucosamine-binding positions include 25–27 (TGG), R218, S248, and Q362.

This sequence belongs to the glycosyltransferase 28 family. MurG subfamily.

The protein resides in the cell membrane. The catalysed reaction is di-trans,octa-cis-undecaprenyl diphospho-N-acetyl-alpha-D-muramoyl-L-alanyl-D-glutamyl-meso-2,6-diaminopimeloyl-D-alanyl-D-alanine + UDP-N-acetyl-alpha-D-glucosamine = di-trans,octa-cis-undecaprenyl diphospho-[N-acetyl-alpha-D-glucosaminyl-(1-&gt;4)]-N-acetyl-alpha-D-muramoyl-L-alanyl-D-glutamyl-meso-2,6-diaminopimeloyl-D-alanyl-D-alanine + UDP + H(+). Its pathway is cell wall biogenesis; peptidoglycan biosynthesis. Cell wall formation. Catalyzes the transfer of a GlcNAc subunit on undecaprenyl-pyrophosphoryl-MurNAc-pentapeptide (lipid intermediate I) to form undecaprenyl-pyrophosphoryl-MurNAc-(pentapeptide)GlcNAc (lipid intermediate II). This chain is UDP-N-acetylglucosamine--N-acetylmuramyl-(pentapeptide) pyrophosphoryl-undecaprenol N-acetylglucosamine transferase, found in Roseiflexus sp. (strain RS-1).